The chain runs to 512 residues: tRNA-2-methylthio-N(6)-dimethylallyladenosine synthase (512 aa).

The region spanning 23–139 (RTYQVRTYGC…LPTLLERARH (117 aa)) is the MTTase N-terminal domain. Residues cysteine 32, cysteine 68, cysteine 102, cysteine 176, cysteine 180, and cysteine 183 each coordinate [4Fe-4S] cluster. One can recognise a Radical SAM core domain in the interval 162–398 (RESAYAAWVS…IELQERISLE (237 aa)). Residues 401 to 469 (REQVGRAVEL…PHHLIADAPI (69 aa)) enclose the TRAM domain. A disordered region spans residues 477–512 (AGDAHAAGQKPRTGVGLGMPRIGAPAPSATAEGCGC).

It belongs to the methylthiotransferase family. MiaB subfamily. In terms of assembly, monomer. [4Fe-4S] cluster is required as a cofactor.

It is found in the cytoplasm. The catalysed reaction is N(6)-dimethylallyladenosine(37) in tRNA + (sulfur carrier)-SH + AH2 + 2 S-adenosyl-L-methionine = 2-methylsulfanyl-N(6)-dimethylallyladenosine(37) in tRNA + (sulfur carrier)-H + 5'-deoxyadenosine + L-methionine + A + S-adenosyl-L-homocysteine + 2 H(+). Catalyzes the methylthiolation of N6-(dimethylallyl)adenosine (i(6)A), leading to the formation of 2-methylthio-N6-(dimethylallyl)adenosine (ms(2)i(6)A) at position 37 in tRNAs that read codons beginning with uridine. The chain is tRNA-2-methylthio-N(6)-dimethylallyladenosine synthase from Mycolicibacterium smegmatis (strain ATCC 700084 / mc(2)155) (Mycobacterium smegmatis).